A 75-amino-acid chain; its full sequence is MSRFFRRRKFCRFTAEGVKQIDYKDLETLKAYISETGKIVPSRITGTKAKYQRQLATAVKRARYLALLPYTDSHE.

This sequence belongs to the bacterial ribosomal protein bS18 family. Part of the 30S ribosomal subunit. Forms a tight heterodimer with protein bS6.

Binds as a heterodimer with protein bS6 to the central domain of the 16S rRNA, where it helps stabilize the platform of the 30S subunit. This Teredinibacter turnerae (strain ATCC 39867 / T7901) protein is Small ribosomal subunit protein bS18.